A 539-amino-acid chain; its full sequence is Protein ENTREP2 (539 aa).

The next 4 membrane-spanning stretches (helical) occupy residues 31–51 (IVLA…AVSF), 65–85 (SCPF…VVSW), 89–109 (LSLV…LNLA), and 176–196 (LLFS…LATA). Residues 301–481 (VVGQPPASQV…TSKERPRSLV (181 aa)) are disordered. Residues 306-331 (PASQVTSIGQQVAESSSGDPNTSAGF) show a composition bias toward polar residues. Residues 347-365 (GTATPGSSPSPDGPVGAPA) are compositionally biased toward low complexity. Over residues 395–408 (SRSTSDPTLCTSSM) the composition is skewed to polar residues.

It belongs to the ENTREP family.

It localises to the membrane. The polypeptide is Protein ENTREP2 (Homo sapiens (Human)).